The sequence spans 425 residues: COP9 signalosome complex subunit 1 (425 aa).

The 161-residue stretch at Ala-219–Asn-379 folds into the PCI domain.

It belongs to the CSN1 family. As to quaternary structure, component of the COP9 signalosome (CSN) complex.

The protein resides in the cytoplasm. The protein localises to the nucleus. Functionally, component of the COP9 signalosome (CSN) complex that acts as an regulator of the ubiquitin (Ubl) conjugation pathway by mediating the deneddylation of the cullin subunit of SCF-type E3 ubiquitin-protein ligase complexes. The CSN complex is involved in the regulation of the circadian clock through its control of the stability of the SCF(FWD-1) complex. The polypeptide is COP9 signalosome complex subunit 1 (csn-1) (Neurospora crassa (strain ATCC 24698 / 74-OR23-1A / CBS 708.71 / DSM 1257 / FGSC 987)).